The following is a 455-amino-acid chain: MFLAWERLCTLSCRPKFLKTVWASKILGLSTSAKMSLRFKNAKRIEGLDSNIWIEFTKLAADPSVVNLGQGLPDISPPVYVKEELSKIAAIDNLNQYTRGFGHPSLVKALSCLYEKFYHNKINPNEEILVTVGAYGSLFNAIQGLIDEGDEVIVIVPFFDCYESMVRMAGATPVFVPLRCKPVDGKKCSSSDWTLDPQELASKFNSKTKAIILNTPHNPLGKVYTKEELQVIADLCIKYDTLCISDEVYEWLVYTGNKHFKIATFPGMWERTITIGSAGKTFSVTGWKLGWSIGPKHLIKHLQTVQQNTVYTCATPLQEALAQAFWIDIKRMDDPECYFNSLPKELEVKRDRMVHLLESVGLKSIVPDGGYFIIADVSLLDVDLLDMKDSNEPYDYKFVKWMIKNKKLSAIPVSAFCNAETKSQFEKFVRFCFIKKDSTLDAAEEIIKAWSRQNS.

Glycine 71 is a substrate binding site. The residue at position 116 (lysine 116) is an N6-acetyllysine; alternate. An N6-succinyllysine; alternate modification is found at lysine 116. Asparagine 218 is a binding site for substrate. Position 280 is an N6-(pyridoxal phosphate)lysine (lysine 280). Arginine 430 contacts substrate.

This sequence belongs to the class-I pyridoxal-phosphate-dependent aminotransferase family. As to quaternary structure, homodimer. The cofactor is pyridoxal 5'-phosphate.

It catalyses the reaction L-kynurenine + 2-oxoglutarate = kynurenate + L-glutamate + H2O. The enzyme catalyses L-kynurenine + glyoxylate = kynurenate + glycine + H2O. The catalysed reaction is 3-hydroxy-L-kynurenine + glyoxylate = xanthurenate + glycine + H2O. It carries out the reaction an S-substituted L-cysteine + H2O = a thiol + pyruvate + NH4(+). Its pathway is amino-acid degradation; L-kynurenine degradation; kynurenate from L-kynurenine: step 1/2. Its function is as follows. Catalyzes the irreversible transamination of the L-tryptophan metabolite L-kynurenine to form kynurenic acid (KA), an intermediate in the tryptophan catabolic pathway which is also a broad spectrum antagonist of the three ionotropic excitatory amino acid receptors among others. May catalyze the beta-elimination of S-conjugates and Se-conjugates of L-(seleno)cysteine, resulting in the cleavage of the C-S or C-Se bond. Has transaminase activity towards L-kynurenine, tryptophan, phenylalanine, serine, cysteine, methionine, histidine, glutamine and asparagine with glyoxylate as an amino group acceptor (in vitro). Has lower activity with 2-oxoglutarate as amino group acceptor (in vitro). In Bos taurus (Bovine), this protein is Kynurenine--oxoglutarate transaminase 3.